We begin with the raw amino-acid sequence, 264 residues long: S-adenosylmethionine decarboxylase proenzyme (264 aa).

S112 acts as the Schiff-base intermediate with substrate; via pyruvic acid in catalysis. S112 is modified (pyruvic acid (Ser); by autocatalysis). H117 functions as the Proton acceptor; for processing activity in the catalytic mechanism. C140 (proton donor; for catalytic activity) is an active-site residue.

This sequence belongs to the prokaryotic AdoMetDC family. Type 2 subfamily. In terms of assembly, heterooctamer of four alpha and four beta chains arranged as a tetramer of alpha/beta heterodimers. The cofactor is pyruvate. Post-translationally, is synthesized initially as an inactive proenzyme. Formation of the active enzyme involves a self-maturation process in which the active site pyruvoyl group is generated from an internal serine residue via an autocatalytic post-translational modification. Two non-identical subunits are generated from the proenzyme in this reaction, and the pyruvate is formed at the N-terminus of the alpha chain, which is derived from the carboxyl end of the proenzyme. The post-translation cleavage follows an unusual pathway, termed non-hydrolytic serinolysis, in which the side chain hydroxyl group of the serine supplies its oxygen atom to form the C-terminus of the beta chain, while the remainder of the serine residue undergoes an oxidative deamination to produce ammonia and the pyruvoyl group blocking the N-terminus of the alpha chain.

It catalyses the reaction S-adenosyl-L-methionine + H(+) = S-adenosyl 3-(methylsulfanyl)propylamine + CO2. The protein operates within amine and polyamine biosynthesis; S-adenosylmethioninamine biosynthesis; S-adenosylmethioninamine from S-adenosyl-L-methionine: step 1/1. Functionally, catalyzes the decarboxylation of S-adenosylmethionine to S-adenosylmethioninamine (dcAdoMet), the propylamine donor required for the synthesis of the polyamines spermine and spermidine from the diamine putrescine. The protein is S-adenosylmethionine decarboxylase proenzyme of Yersinia pseudotuberculosis serotype I (strain IP32953).